A 272-amino-acid polypeptide reads, in one-letter code: METYAVFGNPIAHSKSPFIHQQFAQQLDIVHPYGRVLAPINNFINTLDAFFAAGGKGANITVPFKEEAFARSDELTERASLAGAVNTLKRLEDGRLLGDNTDGIGLLSDLKRLNFIRPGLRILLIGAGGASRGVLLPLLSLDCAVTITNRTASRAEALAKIFAHTGSVHATDMDKLDGCEFDLIINATSSGIRGEIPAIPASLIHPSLCCYDMFYQKGNTPFLSWCVQQGAKRYADGLGMLVGQAAHAVLLWHGVLPQVEPVIELLQQELLA.

Residues 14 to 16 (SKS) and Thr61 contribute to the shikimate site. The active-site Proton acceptor is Lys65. NADP(+) is bound at residue Glu77. The shikimate site is built by Asn86 and Asp102. NADP(+) is bound by residues 126 to 130 (GAGGA), 149 to 154 (NRTASR), and Met213. Tyr215 serves as a coordination point for shikimate. Gly237 contributes to the NADP(+) binding site.

The protein belongs to the shikimate dehydrogenase family. Homodimer.

It catalyses the reaction shikimate + NADP(+) = 3-dehydroshikimate + NADPH + H(+). It functions in the pathway metabolic intermediate biosynthesis; chorismate biosynthesis; chorismate from D-erythrose 4-phosphate and phosphoenolpyruvate: step 4/7. Functionally, involved in the biosynthesis of the chorismate, which leads to the biosynthesis of aromatic amino acids. Catalyzes the reversible NADPH linked reduction of 3-dehydroshikimate (DHSA) to yield shikimate (SA). This chain is Shikimate dehydrogenase (NADP(+)), found in Salmonella heidelberg (strain SL476).